Consider the following 428-residue polypeptide: Sialidase-3 (428 aa).

Residues 24-27 (YRIP) carry the FRIP motif motif. Positions 25 and 45 each coordinate substrate. D50 functions as the Proton acceptor in the catalytic mechanism. A BNR 1 repeat occupies 129–140 (ICSQDAGYSWSD). The substrate site is built by Y179 and Y181. The BNR 2 repeat unit spans residues 203 to 214 (IYSDDLGATWHH). Residues E225 and R245 each contribute to the substrate site. A BNR 3 repeat occupies 254–265 (ALSIDHGECFQK). Position 314 is a phosphoserine (S314). R341 is a binding site for substrate. Y371 (nucleophile) is an active-site residue. Residue E388 is part of the active site.

This sequence belongs to the glycosyl hydrolase 33 family. In terms of assembly, interacts with CAV1; this interaction enhances NEU3 sialidase activity within caveola. Interacts with EGFR; this interaction mediates desialylation of EGFR and enhances downstream signaling. Post-translationally, palmitoylated; may regulate intracellular trafficking and anchorage to plasma membrane and endomembranes. In terms of tissue distribution, expressed in brain.

Its subcellular location is the cell membrane. The protein resides in the membrane. It is found in the caveola. It localises to the early endosome membrane. The protein localises to the recycling endosome membrane. Its subcellular location is the lysosome membrane. The enzyme catalyses Hydrolysis of alpha-(2-&gt;3)-, alpha-(2-&gt;6)-, alpha-(2-&gt;8)- glycosidic linkages of terminal sialic acid residues in oligosaccharides, glycoproteins, glycolipids, colominic acid and synthetic substrates.. It carries out the reaction a ganglioside GD1a + H2O = a ganglioside GM1 + N-acetylneuraminate. It catalyses the reaction a ganglioside GD1a (d18:1(4E)) + H2O = a ganglioside GM1 (d18:1(4E)) + N-acetylneuraminate. The catalysed reaction is a ganglioside GD1b + H2O = a ganglioside GM1 + N-acetylneuraminate. The enzyme catalyses a ganglioside GD1b (d18:1(4E)) + H2O = a ganglioside GM1 (d18:1(4E)) + N-acetylneuraminate. It carries out the reaction a ganglioside GD3 + H2O = a ganglioside GM3 + N-acetylneuraminate. It catalyses the reaction a ganglioside GD3 (d18:1(4E)) + H2O = a ganglioside GM3 (d18:1(4E)) + N-acetylneuraminate. The catalysed reaction is a ganglioside GM3 + H2O = a beta-D-galactosyl-(1-&gt;4)-beta-D-glucosyl-(1&lt;-&gt;1)-ceramide + N-acetylneuraminate. The enzyme catalyses a ganglioside GM1 + H2O = a ganglioside GA1 + N-acetylneuraminate. It carries out the reaction a ganglioside GM1 (d18:1(4E)) + H2O = a ganglioside GA1 (d18:1(4E)) + N-acetylneuraminate. It catalyses the reaction a ganglioside GM2 (d18:1(4E)) + H2O = a ganglioside GA2 (d18:1(4E)) + N-acetylneuraminate. The catalysed reaction is a ganglioside GM3 (d18:1(4E)) + H2O = a beta-D-Gal-(1-&gt;4)-beta-D-Glc-(1&lt;-&gt;1)-Cer(d18:1(4E)) + N-acetylneuraminate. The enzyme catalyses a ganglioside GT1b + H2O = a ganglioside GD1b + N-acetylneuraminate. Its function is as follows. Exo-alpha-sialidase that catalyzes the hydrolytic cleavage of the terminal sialic acid (N-acetylneuraminic acid, Neu5Ac) of a glycan moiety in the catabolism of glycolipids, glycoproteins and oligosacharides. Displays high catalytic efficiency for gangliosides including alpha-(2-&gt;3)-sialylated GD1a and GM3 and alpha-(2-&gt;8)-sialylated GD3. Plays a role in the regulation of transmembrane signaling through the modulation of ganglioside content of the lipid bilayer and by direct interaction with signaling receptors, such as EGFR. Desialylates EGFR and activates downstream signaling in proliferating cells. Contributes to clathrin-mediated endocytosis by regulating sorting of endocytosed receptors to early and recycling endosomes. The protein is Sialidase-3 (NEU3) of Bos taurus (Bovine).